Reading from the N-terminus, the 203-residue chain is N-(5'-phosphoribosyl)anthranilate isomerase (203 aa).

It belongs to the TrpF family.

The enzyme catalyses N-(5-phospho-beta-D-ribosyl)anthranilate = 1-(2-carboxyphenylamino)-1-deoxy-D-ribulose 5-phosphate. It functions in the pathway amino-acid biosynthesis; L-tryptophan biosynthesis; L-tryptophan from chorismate: step 3/5. The chain is N-(5'-phosphoribosyl)anthranilate isomerase from Geotalea uraniireducens (strain Rf4) (Geobacter uraniireducens).